Consider the following 507-residue polypeptide: ATP synthase subunit alpha, chloroplastic (507 aa).

170–177 provides a ligand contact to ATP; the sequence is IGDRQTGK.

This sequence belongs to the ATPase alpha/beta chains family. F-type ATPases have 2 components, CF(1) - the catalytic core - and CF(0) - the membrane proton channel. CF(1) has five subunits: alpha(3), beta(3), gamma(1), delta(1), epsilon(1). CF(0) has four main subunits: a, b, b' and c.

It localises to the plastid. The protein localises to the chloroplast thylakoid membrane. The catalysed reaction is ATP + H2O + 4 H(+)(in) = ADP + phosphate + 5 H(+)(out). Produces ATP from ADP in the presence of a proton gradient across the membrane. The alpha chain is a regulatory subunit. The chain is ATP synthase subunit alpha, chloroplastic from Adiantum capillus-veneris (Maidenhair fern).